Reading from the N-terminus, the 687-residue chain is UvrABC system protein B (687 aa).

In terms of domain architecture, Helicase ATP-binding spans 26-414 (EGLAAGEMYQ…GAVIEQVVRP (389 aa)). 39–46 (GVTGSGKT) lines the ATP pocket. A Beta-hairpin motif is present at residues 92 to 115 (YYDYYQPEAYVPASDTYIGKDASV). The region spanning 430–596 (QVDDLLSEIR…GIQKAVREII (167 aa)) is the Helicase C-terminal domain. The UVR domain maps to 630–665 (AKRLQQLERQMHKHAQNLEFEQAARLRDEIKRIKGW).

It belongs to the UvrB family. As to quaternary structure, forms a heterotetramer with UvrA during the search for lesions. Interacts with UvrC in an incision complex.

The protein resides in the cytoplasm. The UvrABC repair system catalyzes the recognition and processing of DNA lesions. A damage recognition complex composed of 2 UvrA and 2 UvrB subunits scans DNA for abnormalities. Upon binding of the UvrA(2)B(2) complex to a putative damaged site, the DNA wraps around one UvrB monomer. DNA wrap is dependent on ATP binding by UvrB and probably causes local melting of the DNA helix, facilitating insertion of UvrB beta-hairpin between the DNA strands. Then UvrB probes one DNA strand for the presence of a lesion. If a lesion is found the UvrA subunits dissociate and the UvrB-DNA preincision complex is formed. This complex is subsequently bound by UvrC and the second UvrB is released. If no lesion is found, the DNA wraps around the other UvrB subunit that will check the other stand for damage. The protein is UvrABC system protein B of Nitrosococcus oceani (strain ATCC 19707 / BCRC 17464 / JCM 30415 / NCIMB 11848 / C-107).